Here is a 241-residue protein sequence, read N- to C-terminus: Small ribosomal subunit protein uS2 (241 aa).

The protein belongs to the universal ribosomal protein uS2 family.

The sequence is that of Small ribosomal subunit protein uS2 from Hamiltonella defensa subsp. Acyrthosiphon pisum (strain 5AT).